A 160-amino-acid chain; its full sequence is uncharacterized protein (160 aa).

An RING-type zinc finger spans residues Cys8–Arg46.

This is an uncharacterized protein from Caenorhabditis elegans.